The following is a 99-amino-acid chain: Integration host factor subunit alpha (99 aa).

The segment at 49–70 (FGNFDLRDKNQRPGRNPKTGED) is disordered.

This sequence belongs to the bacterial histone-like protein family. Heterodimer of an alpha and a beta chain.

Its function is as follows. This protein is one of the two subunits of integration host factor, a specific DNA-binding protein that functions in genetic recombination as well as in transcriptional and translational control. The chain is Integration host factor subunit alpha from Cronobacter sakazakii (strain ATCC BAA-894) (Enterobacter sakazakii).